The following is a 352-amino-acid chain: MVFRIASSPYTHNQRQTSRIMLLVVIAALPGIAAQTWFFGWGTLFQIVLAAITALVAEAIVLRLRKQSVASHLQDYSALLTGLLLAVSIPPLAPWWMVVLGTGFAIIIAKQLYGGLGQNPFNPAMIGYVVLLISFPVQMTSWLPPYEIAATTPDMLDTLRMIFSGHTASGGDMTLLRIGIDGISQATPLDTFKTSLRAGHSVEQIMQYPIYSGALAGVGWQWVNLAWLVGGVFLLWQKAIRWHIPVSFLLTLALCAALGWLFSPATLASPQLHLLSGATMLGAFFILTDPVTASTTNHGRLIFGALAGVLVWLIRSFGGYPDGVAFAVLLANITVPLIDYYTRPRVYGHRKG.

4 helical membrane passes run 20 to 40 (IMLL…WFFG), 42 to 62 (GTLF…AIVL), 69 to 91 (VASH…SIPP), and 123 to 143 (PAMI…TSWL). Thr187 is modified (FMN phosphoryl threonine). The next 5 helical transmembrane spans lie at 215 to 235 (LAGV…VFLL), 242 to 262 (WHIP…GWLF), 267 to 287 (LASP…FFIL), 301 to 321 (LIFG…GGYP), and 322 to 342 (DGVA…DYYT).

It belongs to the NqrB/RnfD family. The complex is composed of six subunits: RsxA, RsxB, RsxC, RsxD, RsxE and RsxG. FMN is required as a cofactor.

The protein resides in the cell inner membrane. Part of a membrane-bound complex that couples electron transfer with translocation of ions across the membrane. Required to maintain the reduced state of SoxR. The protein is Ion-translocating oxidoreductase complex subunit D of Salmonella enteritidis PT4 (strain P125109).